The following is a 215-amino-acid chain: Orotate phosphoribosyltransferase (215 aa).

K26 contacts 5-phospho-alpha-D-ribose 1-diphosphate. 34–35 is an orotate binding site; it reads FF. 5-phospho-alpha-D-ribose 1-diphosphate is bound by residues 72-73, R99, K100, K103, H105, and 124-132; these read YK and DDVITAGTA. Orotate contacts are provided by T128 and R156.

It belongs to the purine/pyrimidine phosphoribosyltransferase family. PyrE subfamily. As to quaternary structure, homodimer. It depends on Mg(2+) as a cofactor.

The enzyme catalyses orotidine 5'-phosphate + diphosphate = orotate + 5-phospho-alpha-D-ribose 1-diphosphate. The protein operates within pyrimidine metabolism; UMP biosynthesis via de novo pathway; UMP from orotate: step 1/2. In terms of biological role, catalyzes the transfer of a ribosyl phosphate group from 5-phosphoribose 1-diphosphate to orotate, leading to the formation of orotidine monophosphate (OMP). The sequence is that of Orotate phosphoribosyltransferase from Shewanella oneidensis (strain ATCC 700550 / JCM 31522 / CIP 106686 / LMG 19005 / NCIMB 14063 / MR-1).